We begin with the raw amino-acid sequence, 177 residues long: UPF0177 protein YxdF (177 aa).

A run of 4 helical transmembrane segments spans residues 2–22, 30–50, 117–137, and 152–172; these read TLVL…KNTL, IFWL…VTVL, ALVH…SFII, and IVHS…DTFF.

Belongs to the UPF0177 family.

Its subcellular location is the cell membrane. The polypeptide is UPF0177 protein YxdF (yxdF) (Lactococcus lactis subsp. lactis (strain IL1403) (Streptococcus lactis)).